A 370-amino-acid polypeptide reads, in one-letter code: Cytochrome b (370 aa).

4 helical membrane-spanning segments follow: residues 25–45 (FGSM…FLAI), 69–90 (WIMQ…YTHI), 105–125 (WLSG…GYVL), and 170–190 (FFAL…IHIV). Histidine 75 and histidine 89 together coordinate heme b. Heme b is bound by residues histidine 174 and histidine 188. Histidine 193 serves as a coordination point for a ubiquinone. The next 4 membrane-spanning stretches (helical) occupy residues 218–238 (YKDM…MSFM), 280–300 (LGGT…PFTH), 312–332 (LTQI…WTAT), and 339–358 (FITI…IINP).

The protein belongs to the cytochrome b family. The cytochrome bc1 complex contains 3 respiratory subunits (MT-CYB, CYC1 and UQCRFS1), 2 core proteins (UQCRC1 and UQCRC2) and probably 6 low-molecular weight proteins. Requires heme b as cofactor.

It localises to the mitochondrion inner membrane. Functionally, component of the ubiquinol-cytochrome c reductase complex (complex III or cytochrome b-c1 complex) that is part of the mitochondrial respiratory chain. The b-c1 complex mediates electron transfer from ubiquinol to cytochrome c. Contributes to the generation of a proton gradient across the mitochondrial membrane that is then used for ATP synthesis. This chain is Cytochrome b (MT-CYB), found in Micropechis ikaheca (New Guinean small-eyed snake).